We begin with the raw amino-acid sequence, 499 residues long: Trichoplein keratin filament-binding protein (499 aa).

Residues 12–38 (SRVRTLEQQLVRQREQEARLRRQWEQH) adopt a coiled-coil conformation. Disordered stretches follow at residues 46-78 (DVRS…EEKQ) and 169-209 (VQQQ…EEEN). Positions 50-67 (SKQAQWSSRQSFHRSMSA) are enriched in polar residues. Composition is skewed to basic and acidic residues over residues 69–78 (QRDRMREEKQ) and 172–209 (QEKK…EEEN). Coiled-coil stretches lie at residues 71-133 (DRMR…ERRK), 168-306 (QVQQ…ALLE), and 359-484 (WEKR…MIRQ). Positions 74-499 (REEKQRKLEE…IHSRPRSAWT (426 aa)) are interaction with keratin proteins. A trichohyalin/plectin homology domain region spans residues 260-426 (KMMEESRRKT…RLTLRLEKEQ (167 aa)).

The protein belongs to the TCHP family.

The protein localises to the cytoplasm. It is found in the cytoskeleton. Its subcellular location is the microtubule organizing center. The protein resides in the centrosome. May act as a 'capping' or 'branching' protein for keratin filaments in the cell periphery. May regulate K8/K18 filament and desmosome organization mainly at the apical or peripheral regions of simple epithelial cells. This Danio rerio (Zebrafish) protein is Trichoplein keratin filament-binding protein.